A 403-amino-acid chain; its full sequence is Betaine--homocysteine S-methyltransferase 1 (403 aa).

The region spanning 8–311 (KGLLERLDAG…YHTRAIAEEL (304 aa)) is the Hcy-binding domain. Zn(2+)-binding residues include Cys214, Cys296, and Cys297.

Homotetramer. Zn(2+) is required as a cofactor.

The protein localises to the cytoplasm. The enzyme catalyses L-homocysteine + glycine betaine = N,N-dimethylglycine + L-methionine. Its pathway is amine and polyamine degradation; betaine degradation; sarcosine from betaine: step 1/2. It participates in amino-acid biosynthesis; L-methionine biosynthesis via de novo pathway; L-methionine from L-homocysteine (BhmT route): step 1/1. Involved in the regulation of homocysteine metabolism. Converts betaine and homocysteine to dimethylglycine and methionine, respectively. This reaction is also required for the irreversible oxidation of choline. This is Betaine--homocysteine S-methyltransferase 1 (bhmt) from Xenopus tropicalis (Western clawed frog).